The primary structure comprises 136 residues: ATP synthase F(0) complex subunit C1, mitochondrial (136 aa).

Residues 1–61 (MQTTGALLIS…REFQTSVVSR (61 aa)) constitute a mitochondrion transit peptide. Residues 77 to 97 (VGVAGSGAGIGTVFGSLIIGY) form a helical membrane-spanning segment. An N6,N6,N6-trimethyllysine modification is found at lysine 104. A helical membrane pass occupies residues 112–132 (ILGFALSEAMGLFCLMVAFLI).

It belongs to the ATPase C chain family. In terms of assembly, homooctamer; the c-ring consists of eight c subunits forming a circle, and each subunit adopts a hairpin shape. Component of the ATP synthase complex composed at least of ATP5F1A/subunit alpha, ATP5F1B/subunit beta, ATP5MC1/subunit c (homooctomer), MT-ATP6/subunit a, MT-ATP8/subunit 8, ATP5ME/subunit e, ATP5MF/subunit f, ATP5MG/subunit g, ATP5MK/subunit k, ATP5MJ/subunit j, ATP5F1C/subunit gamma, ATP5F1D/subunit delta, ATP5F1E/subunit epsilon, ATP5PF/subunit F6, ATP5PB/subunit b, ATP5PD/subunit d, ATP5PO/subunit OSCP. ATP synthase complex consists of a soluble F(1) head domain (subunits alpha(3) and beta(3)) - the catalytic core - and a membrane F(0) domain - the membrane proton channel (subunits c, a, 8, e, f, g, k and j). These two domains are linked by a central stalk (subunits gamma, delta, and epsilon) rotating inside the F1 region and a stationary peripheral stalk (subunits F6, b, d, and OSCP). Interacts with TMEM70 (homooligomer form); this interaction facilitates the oligomer formation of subunit c/ATP5MC1 (c-ring) and the c-ring membrane insertion and also protects ATP5MC1 against intramitochondrial proteolysis. Post-translationally, trimethylated by ATPSCKMT at Lys-104. Methylation is required for proper incorporation of the C subunit into the ATP synthase complex and mitochondrial respiration.

The protein resides in the mitochondrion membrane. It carries out the reaction H(+)(in) = H(+)(out). In terms of biological role, subunit c, of the mitochondrial membrane ATP synthase complex (F(1)F(0) ATP synthase or Complex V) that produces ATP from ADP in the presence of a proton gradient across the membrane which is generated by electron transport complexes of the respiratory chain. ATP synthase complex consist of a soluble F(1) head domain - the catalytic core - and a membrane F(1) domain - the membrane proton channel. These two domains are linked by a central stalk rotating inside the F(1) region and a stationary peripheral stalk. During catalysis, ATP synthesis in the catalytic domain of F(1) is coupled via a rotary mechanism of the central stalk subunits to proton translocation. With the subunit a (MT-ATP6), forms the proton-conducting channel in the F(0) domain, that contains two crucial half-channels (inlet and outlet) that facilitate proton movement from the mitochondrial intermembrane space (IMS) into the matrix. Protons are taken up via the inlet half-channel and released through the outlet half-channel, following a Grotthuss mechanism. This is ATP synthase F(0) complex subunit C1, mitochondrial from Ovis aries (Sheep).